The primary structure comprises 269 residues: Expansin-B1 (269 aa).

Positions 1 to 24 are cleaved as a signal peptide; that stretch reads MGSLANNIMVVGAVLAALVAGGSC. Asparagine 34 carries N-linked (GlcNAc...) asparagine glycosylation. The Expansin-like EG45 domain occupies 63-169; the sequence is GGACGIKNVN…RRVRCKYPAG (107 aa). Intrachain disulfides connect cysteine 66/cysteine 94, cysteine 97/cysteine 164, and cysteine 102/cysteine 108. An Expansin-like CBD domain is found at 183-264; sequence NYLAVLVKYV…NWRPDAVYTS (82 aa).

This sequence belongs to the expansin family. Expansin B subfamily. Expressed in anthers and pollen.

The protein resides in the secreted. The protein localises to the cell wall. Its subcellular location is the membrane. Its function is as follows. May aid fertilization by loosening the cell wall of the stigma and style, thereby facilitating penetration of the pollen tube. Acts selectively on grass cell walls, which are relatively poor in pectins and xyloglucans and rich in glucuronoarabinoxylans and (1-3),(1-4)-beta-D-glucans, when compared with cell walls of other angiosperms, including other monocots. This chain is Expansin-B1 (EXPB1), found in Zea mays (Maize).